A 197-amino-acid polypeptide reads, in one-letter code: MPPAGPRGTAPLAAVVLLVLGAPLALASEDCLWYLDRNGSWHPGFDCEFFTFCCGTCYQRYCCRDLTLLITERQQKHCLAFSPKTIAGIASAVILFVAVVATTICCFLCSCCYLYRRRQQLQSTFEGQEIPMTGIPMQPVYQYPPDPKAGPAPPQPGFMYPPSGPAPQYPLYPAGPPIYNPAAPPPYMPPQPSYPGA.

An N-terminal signal peptide occupies residues 1 to 27; it reads MPPAGPRGTAPLAAVVLLVLGAPLALA. The Extracellular segment spans residues 28 to 87; that stretch reads SEDCLWYLDRNGSWHPGFDCEFFTFCCGTCYQRYCCRDLTLLITERQQKHCLAFSPKTIA. A helical transmembrane segment spans residues 88–108; sequence GIASAVILFVAVVATTICCFL. Topologically, residues 109–197 are cytoplasmic; it reads CSCCYLYRRR…MPPQPSYPGA (89 aa).

Belongs to the shisa family.

It localises to the membrane. In Mus musculus (Mouse), this protein is Protein shisa-4 (Shisa4).